The chain runs to 329 residues: Peroxidase 30 (329 aa).

An N-terminal signal peptide occupies residues 1-27 (MKTMTQLNIAVVVVVTVLIGMLRSSEA). Intrachain disulfides connect cysteine 38/cysteine 116, cysteine 71/cysteine 76, cysteine 122/cysteine 324, and cysteine 201/cysteine 234. Histidine 69 acts as the Proton acceptor in catalysis. Residues aspartate 70, valine 73, glycine 75, aspartate 77, and serine 79 each coordinate Ca(2+). 2 N-linked (GlcNAc...) asparagine glycosylation sites follow: asparagine 83 and asparagine 155. The segment at 141-165 (SWSVPTGRRDGRISNKTEATNNIPP) is disordered. The segment covering 156 to 165 (KTEATNNIPP) has biased composition (polar residues). Proline 164 serves as a coordination point for substrate. Residue asparagine 169 is glycosylated (N-linked (GlcNAc...) asparagine). Histidine 194 contacts heme b. Threonine 195 contacts Ca(2+). N-linked (GlcNAc...) asparagine glycans are attached at residues asparagine 210 and asparagine 240. The Ca(2+) site is built by aspartate 247, serine 250, and aspartate 255. Residue asparagine 290 is glycosylated (N-linked (GlcNAc...) asparagine).

This sequence belongs to the peroxidase family. Classical plant (class III) peroxidase subfamily. Heme b serves as cofactor. Ca(2+) is required as a cofactor. In terms of tissue distribution, mainly expressed in roots.

The protein localises to the secreted. It catalyses the reaction 2 a phenolic donor + H2O2 = 2 a phenolic radical donor + 2 H2O. Its function is as follows. Removal of H(2)O(2), oxidation of toxic reductants, biosynthesis and degradation of lignin, suberization, auxin catabolism, response to environmental stresses such as wounding, pathogen attack and oxidative stress. These functions might be dependent on each isozyme/isoform in each plant tissue. The polypeptide is Peroxidase 30 (PER30) (Arabidopsis thaliana (Mouse-ear cress)).